Reading from the N-terminus, the 718-residue chain is DNA ligase (718 aa).

NAD(+) contacts are provided by residues 34 to 38 (DAEYD), 83 to 84 (SL), and E115. The active-site N6-AMP-lysine intermediate is the K117. Positions 138, 186, 302, and 326 each coordinate NAD(+). Residues C420, C423, C438, and C444 each contribute to the Zn(2+) site. The BRCT domain occupies 604–694 (PKGDALAGKT…DRSAPAASNN (91 aa)).

The protein belongs to the NAD-dependent DNA ligase family. LigA subfamily. The cofactor is Mg(2+). Requires Mn(2+) as cofactor.

It catalyses the reaction NAD(+) + (deoxyribonucleotide)n-3'-hydroxyl + 5'-phospho-(deoxyribonucleotide)m = (deoxyribonucleotide)n+m + AMP + beta-nicotinamide D-nucleotide.. Its function is as follows. DNA ligase that catalyzes the formation of phosphodiester linkages between 5'-phosphoryl and 3'-hydroxyl groups in double-stranded DNA using NAD as a coenzyme and as the energy source for the reaction. It is essential for DNA replication and repair of damaged DNA. This Roseiflexus castenholzii (strain DSM 13941 / HLO8) protein is DNA ligase.